The chain runs to 835 residues: Leucine--tRNA ligase (835 aa).

Residues 36–46 carry the 'HIGH' region motif; that stretch reads PYPSGKIHVGH. The 'KMSKS' region signature appears at 602-606; it reads KMSKS. Position 605 (Lys-605) interacts with ATP.

The protein belongs to the class-I aminoacyl-tRNA synthetase family.

The protein resides in the cytoplasm. The catalysed reaction is tRNA(Leu) + L-leucine + ATP = L-leucyl-tRNA(Leu) + AMP + diphosphate. This is Leucine--tRNA ligase from Rickettsia conorii (strain ATCC VR-613 / Malish 7).